The sequence spans 149 residues: Ribonuclease pancreatic (149 aa).

An N-terminal signal peptide occupies residues 1–25 (MGLENSLILFSLLVLVLGWVQPSLG). The segment at 25–62 (GKESSPDKFKRQHMDTEGSSKSSPTYCNQMRSPQEMTK) is disordered. Residues 28–42 (SSPDKFKRQHMDTEG) show a composition bias toward basic and acidic residues. Substrate is bound by residues Lys32 and Arg35. His37 serves as the catalytic Proton acceptor. Over residues 43–61 (SSKSSPTYCNQMRSPQEMT) the composition is skewed to polar residues. 4 disulfide bridges follow: Cys51/Cys109, Cys65/Cys120, Cys83/Cys135, and Cys90/Cys97. Substrate contacts are provided by residues 66-70 (KPVNT) and Lys91. The active-site Proton donor is His144.

This sequence belongs to the pancreatic ribonuclease family. In terms of assembly, monomer. Interacts with and forms tight 1:1 complexes with RNH1. Dimerization of two such complexes may occur. Interaction with RNH1 inhibits this protein.

The protein resides in the secreted. It carries out the reaction an [RNA] containing cytidine + H2O = an [RNA]-3'-cytidine-3'-phosphate + a 5'-hydroxy-ribonucleotide-3'-[RNA].. The catalysed reaction is an [RNA] containing uridine + H2O = an [RNA]-3'-uridine-3'-phosphate + a 5'-hydroxy-ribonucleotide-3'-[RNA].. Endonuclease that catalyzes the cleavage of RNA on the 3' side of pyrimidine nucleotides. Acts on single-stranded and double-stranded RNA. This is Ribonuclease pancreatic (RNASE1) from Sundamys muelleri (Mueller's giant sunda rat).